A 443-amino-acid chain; its full sequence is Signal recognition particle 54 kDa protein (443 aa).

GTP is bound by residues 104 to 111 (GLQGSGKT), 184 to 188 (DTAGR), and 242 to 245 (TKLD).

It belongs to the GTP-binding SRP family. SRP54 subfamily. In terms of assembly, part of the signal recognition particle protein translocation system, which is composed of SRP and FtsY. Archaeal SRP consists of a 7S RNA molecule of 300 nucleotides and two protein subunits: SRP54 and SRP19.

It localises to the cytoplasm. It catalyses the reaction GTP + H2O = GDP + phosphate + H(+). In terms of biological role, involved in targeting and insertion of nascent membrane proteins into the cytoplasmic membrane. Binds to the hydrophobic signal sequence of the ribosome-nascent chain (RNC) as it emerges from the ribosomes. The SRP-RNC complex is then targeted to the cytoplasmic membrane where it interacts with the SRP receptor FtsY. The sequence is that of Signal recognition particle 54 kDa protein from Methanosarcina mazei (strain ATCC BAA-159 / DSM 3647 / Goe1 / Go1 / JCM 11833 / OCM 88) (Methanosarcina frisia).